Consider the following 663-residue polypeptide: Cytochrome bo(3) ubiquinol oxidase subunit 1 (663 aa).

At 1 to 16 (MFGKLSLDAVPFHEPI) the chain is on the periplasmic side. A helical transmembrane segment spans residues 17-35 (VMVTIAGIILGGLALVGLI). Topologically, residues 36–52 (TYFGKWTYLWKEWLTSV) are cytoplasmic. The helical transmembrane segment at 53–80 (DHKRLGIMYIIVAIVMLLRGFADAIMMR) threads the bilayer. Ubiquinone-8 is bound by residues arginine 71 and aspartate 75. At 81–95 (SQQALASAGEAGFLP) the chain is on the periplasmic side. A helical transmembrane segment spans residues 96 to 132 (PHHYDQIFTAHGVIMIFFVAMPFVIGLMNLVVPLQIG). Position 98 (histidine 98) interacts with ubiquinone-8. Residue histidine 106 participates in heme b binding. At 133–137 (ARDVA) the chain is on the cytoplasmic side. A helical membrane pass occupies residues 138–161 (FPFLNNLSFWFTVVGVILVNVSLG). The Periplasmic portion of the chain corresponds to 162-184 (VGEFAQTGWLAYPPLSGIEYSPG). Tryptophan 170 provides a ligand contact to heme b. A helical transmembrane segment spans residues 185–215 (VGVDYWIWSLQLSGIGTTLTGINFFVTILKM). Topologically, residues 216–224 (RAPGMTMFK) are cytoplasmic. Residues 225–260 (MPVFTWASLCANVLIIASFPILTVTVALLTLDRYLG) form a helical membrane-spanning segment. Residues 261–270 (THFFTNDMGG) are Periplasmic-facing. A helical transmembrane segment spans residues 271–307 (NMMMYINLIWAWGHPEVYILILPVFGVFSEIAATFSR). Histidine 284 contributes to the Cu(2+) binding site. A cross-link (1'-histidyl-3'-tyrosine (His-Tyr)) is located at residues 284–288 (HPEVY). Tyrosine 288 contacts Fe(II)-heme o. Topologically, residues 308 to 311 (KRLF) are cytoplasmic. Residues 312–326 (GYTSLVWATVCITVL) form a helical membrane-spanning segment. The Periplasmic segment spans residues 327 to 340 (SFIVWLHHFFTMGA). Cu(2+) is bound by residues histidine 333 and histidine 334. The chain crosses the membrane as a helical span at residues 341–369 (GANVNAFFGITTMIIAIPTGVKIFNWLFT). At 370-377 (MYQGRIVF) the chain is on the cytoplasmic side. Residues 378 to 409 (HSAMLWTIGFIVTFSVGGMTGVLLAVPGADFV) form a helical membrane-spanning segment. The Periplasmic segment spans residues 410–412 (LHN). Positions 411 and 419 each coordinate Fe(II)-heme o. A helical membrane pass occupies residues 413-445 (SLFLIAHFHNVIIGGVVFGCFAGMTYWWPKAFG). Histidine 421 contributes to the heme b binding site. The Cytoplasmic portion of the chain corresponds to 446–448 (FKL). The chain crosses the membrane as a helical span at residues 449-477 (NETWGKRAFWFWIIGFFVAFMPLYALGFM). The Periplasmic portion of the chain corresponds to 478 to 489 (GMTRRLSQQIDP). The heme b site is built by arginine 481 and arginine 482. Residues 490–521 (QFHTMLMIAASGAVLIALGILCLVIQMYVSIR) traverse the membrane as a helical segment. Topologically, residues 522–587 (DRDQNRDLTG…DHYEEIHMPK (66 aa)) are cytoplasmic. Residues 588 to 606 (NSGAGIVIAAFSTIFGFAM) traverse the membrane as a helical segment. Residues 607 to 613 (IWHIWWL) are Periplasmic-facing. The helical transmembrane segment at 614–632 (AIVGFAGMIITWIVKSFDE) threads the bilayer. Residues 633-663 (DVDYYVPVAEIEKLENQHFDEITKAGLKNGN) are Cytoplasmic-facing.

Belongs to the heme-copper respiratory oxidase family. The cytochrome bo(3) ubiquinol oxidase complex is a heterooctamer of two A chains, two B chains, two C chains and two D chains. Cu(2+) serves as cofactor. It depends on heme b as a cofactor. Requires Fe(II)-heme o as cofactor.

The protein localises to the cell inner membrane. It catalyses the reaction 2 a ubiquinol + O2 + n H(+)(in) = 2 a ubiquinone + 2 H2O + n H(+)(out). Its function is as follows. Cytochrome bo(3) ubiquinol oxidase is the terminal enzyme in the aerobic respiratory chain of E.coli that predominates when cells are grown at high aeration. Catalyzes the four-electron reduction of O2 to water, using a ubiquinol as a membrane soluble electron donor for molecular oxygen reduction; ubiquinol-8 is the natural substrate for E.coli. Has proton pump activity across the membrane in addition to electron transfer, pumping 2 protons/electron and generating a proton motive force. All the redox centers of this enzyme complex are located within the largest subunit, subunit I. Protons are probably pumped via D- and K- channels found in this subunit. This chain is Cytochrome bo(3) ubiquinol oxidase subunit 1 (cyoB), found in Escherichia coli O157:H7.